The chain runs to 295 residues: Cytidine deaminase (295 aa).

2 CMP/dCMP-type deaminase domains span residues 48–168 (EDAD…FGPA) and 187–295 (DDDE…YLSL). 89–91 (NME) lines the substrate pocket. His102 contributes to the Zn(2+) binding site. Glu104 (proton donor) is an active-site residue. 2 residues coordinate Zn(2+): Cys129 and Cys132.

It belongs to the cytidine and deoxycytidylate deaminase family. As to quaternary structure, homodimer. Requires Zn(2+) as cofactor.

The enzyme catalyses cytidine + H2O + H(+) = uridine + NH4(+). It catalyses the reaction 2'-deoxycytidine + H2O + H(+) = 2'-deoxyuridine + NH4(+). Its function is as follows. This enzyme scavenges exogenous and endogenous cytidine and 2'-deoxycytidine for UMP synthesis. The protein is Cytidine deaminase of Vibrio cholerae serotype O1 (strain ATCC 39315 / El Tor Inaba N16961).